The following is a 253-amino-acid chain: MHTKRIIPCLDVKDGRVVKGINFKGIIDVGNPVDLAKHYNDQGADELVFLDITATHEKRGIMMRVVEEVAEQIFIPFTVGGGLSSLEDIKAILRAGADKVSLNSAAVKNKKLIKESAFYFGNQCIVLAIDGKKRRDNSGWNVVINGGRIDTGIDLLSWVEEVTKLGAGEILLTSMDADGTKNGFDLALTKAVSDITSVPVIASGGCGCLEDFYDVLKNNTSDAALAASLFHYDELTVKDVKKYLINKKIPIRV.

Residues Asp-11 and Asp-130 contribute to the active site.

Belongs to the HisA/HisF family. Heterodimer of HisH and HisF.

The protein localises to the cytoplasm. It carries out the reaction 5-[(5-phospho-1-deoxy-D-ribulos-1-ylimino)methylamino]-1-(5-phospho-beta-D-ribosyl)imidazole-4-carboxamide + L-glutamine = D-erythro-1-(imidazol-4-yl)glycerol 3-phosphate + 5-amino-1-(5-phospho-beta-D-ribosyl)imidazole-4-carboxamide + L-glutamate + H(+). Its pathway is amino-acid biosynthesis; L-histidine biosynthesis; L-histidine from 5-phospho-alpha-D-ribose 1-diphosphate: step 5/9. Functionally, IGPS catalyzes the conversion of PRFAR and glutamine to IGP, AICAR and glutamate. The HisF subunit catalyzes the cyclization activity that produces IGP and AICAR from PRFAR using the ammonia provided by the HisH subunit. The sequence is that of Imidazole glycerol phosphate synthase subunit HisF from Clostridium botulinum (strain Alaska E43 / Type E3).